The sequence spans 305 residues: tRNA pseudouridine synthase B (305 aa).

Catalysis depends on Asp-39, which acts as the Nucleophile. Positions 237–305 (LPVIIVPGEF…FLLKPHKVLK (69 aa)) constitute a PUA domain.

It belongs to the pseudouridine synthase TruB family. Type 1 subfamily.

The catalysed reaction is uridine(55) in tRNA = pseudouridine(55) in tRNA. In terms of biological role, responsible for synthesis of pseudouridine from uracil-55 in the psi GC loop of transfer RNAs. The chain is tRNA pseudouridine synthase B from Moorella thermoacetica (strain ATCC 39073 / JCM 9320).